Here is a 206-residue protein sequence, read N- to C-terminus: Large ribosomal subunit protein uL4 (206 aa).

The protein belongs to the universal ribosomal protein uL4 family. In terms of assembly, part of the 50S ribosomal subunit.

Its function is as follows. One of the primary rRNA binding proteins, this protein initially binds near the 5'-end of the 23S rRNA. It is important during the early stages of 50S assembly. It makes multiple contacts with different domains of the 23S rRNA in the assembled 50S subunit and ribosome. Functionally, forms part of the polypeptide exit tunnel. The chain is Large ribosomal subunit protein uL4 from Nitrobacter winogradskyi (strain ATCC 25391 / DSM 10237 / CIP 104748 / NCIMB 11846 / Nb-255).